The following is a 319-amino-acid chain: Aliphatic sulfonates import ATP-binding protein SsuB (319 aa).

An ABC transporter domain is found at 63-282 (VTLSGVSKRF…ARASAAFAAL (220 aa)). 95-102 (GRSGCGKS) serves as a coordination point for ATP.

It belongs to the ABC transporter superfamily. Aliphatic sulfonates importer (TC 3.A.1.17.2) family. In terms of assembly, the complex is composed of two ATP-binding proteins (SsuB), two transmembrane proteins (SsuC) and a solute-binding protein (SsuA).

The protein localises to the cell inner membrane. It carries out the reaction ATP + H2O + aliphatic sulfonate-[sulfonate-binding protein]Side 1 = ADP + phosphate + aliphatic sulfonateSide 2 + [sulfonate-binding protein]Side 1.. In terms of biological role, part of the ABC transporter complex SsuABC involved in aliphatic sulfonates import. Responsible for energy coupling to the transport system. This Burkholderia ambifaria (strain ATCC BAA-244 / DSM 16087 / CCUG 44356 / LMG 19182 / AMMD) (Burkholderia cepacia (strain AMMD)) protein is Aliphatic sulfonates import ATP-binding protein SsuB.